The primary structure comprises 356 residues: Glycerophosphodiester phosphodiesterase (356 aa).

Residues 1–20 (MRGTYCVTLWGGVFAALVAG) form the signal peptide. A lipid anchor (N-palmitoyl cysteine) is attached at Cys21. A lipid anchor (S-diacylglycerol cysteine) is attached at Cys21. The GP-PDE domain occupies 25–314 (RMIVAYRGAA…CHVHTVRKET (290 aa)).

This sequence belongs to the glycerophosphoryl diester phosphodiesterase family. Palmitoylated upon expression of a fusion protein with first 40 residues fused to PhoA in E.coli.

The protein resides in the cell inner membrane. The enzyme catalyses a sn-glycero-3-phosphodiester + H2O = an alcohol + sn-glycerol 3-phosphate + H(+). Functionally, glycerophosphoryl diester phosphodiesterase hydrolyzes deacylated phospholipids to G3P and the corresponding alcohols. Its function is as follows. Binds human IgA, IgD and the Fc portion of IgG but not IgM, which may contribute to evasion of the human immune system. The sequence is that of Glycerophosphodiester phosphodiesterase (glpQ) from Treponema pallidum (strain Nichols).